The sequence spans 92 residues: UPF0125 protein NMA1005 (92 aa).

Belongs to the UPF0125 (RnfH) family.

This Neisseria meningitidis serogroup A / serotype 4A (strain DSM 15465 / Z2491) protein is UPF0125 protein NMA1005.